The chain runs to 445 residues: UPF0210 protein SPJ_0248 (445 aa).

This sequence belongs to the UPF0210 family. As to quaternary structure, homodimer.

The protein is UPF0210 protein SPJ_0248 of Streptococcus pneumoniae (strain JJA).